The following is a 237-amino-acid chain: Isoprenyl transferase (237 aa).

Residue aspartate 14 is part of the active site. Aspartate 14 provides a ligand contact to Mg(2+). Substrate contacts are provided by residues 15 to 18, tryptophan 19, arginine 27, histidine 31, and 59 to 61; these read GNGR and STE. The active-site Proton acceptor is asparagine 62. Substrate contacts are provided by residues tryptophan 63, arginine 65, arginine 184, and 190–192; that span reads RIS. Glutamate 203 serves as a coordination point for Mg(2+).

The protein belongs to the UPP synthase family. In terms of assembly, homodimer. The cofactor is Mg(2+).

Functionally, catalyzes the condensation of isopentenyl diphosphate (IPP) with allylic pyrophosphates generating different type of terpenoids. The polypeptide is Isoprenyl transferase (Helicobacter hepaticus (strain ATCC 51449 / 3B1)).